The chain runs to 364 residues: RNA-binding protein 4 (364 aa).

2 consecutive RRM domains span residues 2–72 (VKLF…ASKN) and 78–148 (TKLH…LSTS). A Glycyl lysine isopeptide (Lys-Gly) (interchain with G-Cter in SUMO2) cross-link involves residue lysine 79. Phosphoserine is present on serine 86. A Glycyl lysine isopeptide (Lys-Gly) (interchain with G-Cter in SUMO2) cross-link involves residue lysine 92. Residues 160–177 (SGCYRCGKEGHWSKECPI) form a CCHC-type zinc finger. The tract at residues 196–364 (AVRTPYTMSY…YADRARYSAF (169 aa)) is interaction with TNPO3. Phosphoserine is present on serine 309.

As to quaternary structure, interacts with TNPO3; the interaction mediates nuclear import of the protein and is disrupted by nuclear Ran bound to GTP. Interacts with EIF4G1 and WT1. Interacts with EIF4A1; the interaction is modulated under stress-induced conditions. Interacts with AGO1. Interacts with AGO2; the interaction occurs under both cell proliferation and differentiation conditions and in an RNA- and phosphorylation-independent manner. Interacts with DDX5; the interaction occurs in an RNA-independent manner. Interacts with RBPMS; the interaction allows cooperative assembly of RNA-bound stable cell-specific alternative splicing regulatory complexes. Post-translationally, phosphorylated. Phosphorylated in vitro on Ser-309 by SRPK1. Phosphorylation on Ser-309 is induced upon cell stress signaling, which alters its subcellular localization and may modulate its activity on IRES-mediated mRNA translation. Phosphorylation on Ser-309 is induced upon cell muscle differentiation.

Its subcellular location is the nucleus. The protein resides in the nucleolus. It localises to the nucleus speckle. It is found in the cytoplasm. The protein localises to the cytoplasmic granule. Its function is as follows. RNA-binding factor involved in multiple aspects of cellular processes like alternative splicing of pre-mRNA and translation regulation. Modulates alternative 5'-splice site and exon selection. Acts as a muscle cell differentiation-promoting factor. Activates exon skipping of the PTB pre-mRNA during muscle cell differentiation. Antagonizes the activity of the splicing factor PTBP1 to modulate muscle cell-specific exon selection of alpha tropomyosin. Binds to intronic pyrimidine-rich sequence of the TPM1 and MAPT pre-mRNAs. Required for the translational activation of PER1 mRNA in response to circadian clock. Binds directly to the 3'-UTR of the PER1 mRNA. Exerts a suppressive activity on Cap-dependent translation via binding to CU-rich responsive elements within the 3'UTR of mRNAs, a process increased under stress conditions or during myocytes differentiation. Recruits EIF4A1 to stimulate IRES-dependent translation initiation in respons to cellular stress. Associates to internal ribosome entry segment (IRES) in target mRNA species under stress conditions. Plays a role for miRNA-guided RNA cleavage and translation suppression by promoting association of AGO2-containing miRNPs with their cognate target mRNAs. Associates with miRNAs during muscle cell differentiation. Binds preferentially to 5'-CGCGCG[GCA]-3' motif in vitro. The chain is RNA-binding protein 4 (RBM4) from Macaca fascicularis (Crab-eating macaque).